A 337-amino-acid chain; its full sequence is Transaldolase (337 aa).

Position 115 is an N6-acetyllysine (Lys-115). Catalysis depends on Lys-142, which acts as the Schiff-base intermediate with substrate. Residue Lys-219 is modified to N6-acetyllysine. Ser-237 and Ser-256 each carry phosphoserine. Residues Lys-269, Lys-286, and Lys-321 each carry the N6-acetyllysine modification.

It belongs to the transaldolase family. Type 1 subfamily. In terms of assembly, homodimer.

It is found in the cytoplasm. The catalysed reaction is D-sedoheptulose 7-phosphate + D-glyceraldehyde 3-phosphate = D-erythrose 4-phosphate + beta-D-fructose 6-phosphate. It functions in the pathway carbohydrate degradation; pentose phosphate pathway; D-glyceraldehyde 3-phosphate and beta-D-fructose 6-phosphate from D-ribose 5-phosphate and D-xylulose 5-phosphate (non-oxidative stage): step 2/3. Transaldolase is important for the balance of metabolites in the pentose-phosphate pathway. In Bos taurus (Bovine), this protein is Transaldolase (TALDO1).